Reading from the N-terminus, the 317-residue chain is WSCD family member CG9164 (317 aa).

The helical transmembrane segment at Phe-8 to Asn-28 threads the bilayer. 3 N-linked (GlcNAc...) asparagine glycosylation sites follow: Asn-151, Asn-227, and Asn-233.

The protein belongs to the WSCD family.

It localises to the membrane. This Drosophila melanogaster (Fruit fly) protein is WSCD family member CG9164.